The following is a 134-amino-acid chain: Large ribosomal subunit protein uL16c (134 aa).

The protein belongs to the universal ribosomal protein uL16 family. Part of the 50S ribosomal subunit.

Its subcellular location is the plastid. It is found in the chloroplast. The sequence is that of Large ribosomal subunit protein uL16c from Guillardia theta (Cryptophyte).